We begin with the raw amino-acid sequence, 144 residues long: MKQFYIVDSSMLPEVVGKVIAARALLQNGEVKQVSEAVKQVGISRGTYYKYKDYVFLPDPEMASRKAVISLMLHHDRGILSEVLTTMSQAQASIVTINQNIPIHNWASVVMSFDISALQGTLDDLVTKLGNIRGVSDVHLVSVE.

The region spanning 68–143 is the ACT domain; it reads VISLMLHHDR…GVSDVHLVSV (76 aa).

It belongs to the UPF0735 family.

This Lacticaseibacillus casei (strain BL23) (Lactobacillus casei) protein is UPF0735 ACT domain-containing protein LCABL_12100.